The sequence spans 74 residues: Exodeoxyribonuclease 7 small subunit (74 aa).

It belongs to the XseB family. In terms of assembly, heterooligomer composed of large and small subunits.

It is found in the cytoplasm. The enzyme catalyses Exonucleolytic cleavage in either 5'- to 3'- or 3'- to 5'-direction to yield nucleoside 5'-phosphates.. Functionally, bidirectionally degrades single-stranded DNA into large acid-insoluble oligonucleotides, which are then degraded further into small acid-soluble oligonucleotides. The chain is Exodeoxyribonuclease 7 small subunit from Glaesserella parasuis serovar 5 (strain SH0165) (Haemophilus parasuis).